Reading from the N-terminus, the 339-residue chain is Nicotinate-nucleotide--dimethylbenzimidazole phosphoribosyltransferase (339 aa).

Catalysis depends on glutamate 306, which acts as the Proton acceptor.

This sequence belongs to the CobT family.

It carries out the reaction 5,6-dimethylbenzimidazole + nicotinate beta-D-ribonucleotide = alpha-ribazole 5'-phosphate + nicotinate + H(+). The protein operates within nucleoside biosynthesis; alpha-ribazole biosynthesis; alpha-ribazole from 5,6-dimethylbenzimidazole: step 1/2. In terms of biological role, catalyzes the synthesis of alpha-ribazole-5'-phosphate from nicotinate mononucleotide (NAMN) and 5,6-dimethylbenzimidazole (DMB). This chain is Nicotinate-nucleotide--dimethylbenzimidazole phosphoribosyltransferase, found in Brucella abortus (strain S19).